The primary structure comprises 23 residues: Phospholipase A2 homolog 4 (23 aa).

The protein belongs to the phospholipase A2 family. Group II subfamily. K49 sub-subfamily. As to quaternary structure, homodimer; non-covalently linked (probable alternative/compact dimer conformation in solution). Expressed by the venom gland.

The protein resides in the secreted. In terms of biological role, snake venom phospholipase A2 homolog that lacks enzymatic activity. Induces acute muscle damage after intramuscular injection in mice and disrupts negatively charged liposomes but not positively charged ones. Also exerts a weak anticoagulant effect only at concentrations of 40 ug/ml or higher. A model of myotoxic mechanism has been proposed: an apo Lys49-PLA2 is activated by the entrance of a hydrophobic molecule (e.g. fatty acid) at the hydrophobic channel of the protein leading to a reorientation of a monomer. This reorientation causes a transition between 'inactive' to 'active' states, causing alignment of C-terminal and membrane-docking sites (MDoS) side-by-side and putting the membrane-disruption sites (MDiS) in the same plane, exposed to solvent and in a symmetric position for both monomers. The MDoS region stabilizes the toxin on membrane by the interaction of charged residues with phospholipid head groups. Subsequently, the MDiS region destabilizes the membrane with penetration of hydrophobic residues. This insertion causes a disorganization of the membrane, allowing an uncontrolled influx of ions (i.e. calcium and sodium), and eventually triggering irreversible intracellular alterations and cell death. This chain is Phospholipase A2 homolog 4, found in Bothrops asper (Terciopelo).